A 288-amino-acid chain; its full sequence is Pantothenate synthetase (288 aa).

30-37 is an ATP binding site; it reads MGFLHEGH. The Proton donor role is filled by histidine 37. Glutamine 61 serves as a coordination point for (R)-pantoate. Glutamine 61 is a beta-alanine binding site. 147–150 is an ATP binding site; the sequence is GLKD. Residue glutamine 153 participates in (R)-pantoate binding. ATP-binding positions include valine 176 and 184 to 187; that span reads KSSR.

This sequence belongs to the pantothenate synthetase family. Homodimer.

It is found in the cytoplasm. The catalysed reaction is (R)-pantoate + beta-alanine + ATP = (R)-pantothenate + AMP + diphosphate + H(+). The protein operates within cofactor biosynthesis; (R)-pantothenate biosynthesis; (R)-pantothenate from (R)-pantoate and beta-alanine: step 1/1. In terms of biological role, catalyzes the condensation of pantoate with beta-alanine in an ATP-dependent reaction via a pantoyl-adenylate intermediate. The chain is Pantothenate synthetase from Bacillus pumilus (strain SAFR-032).